We begin with the raw amino-acid sequence, 246 residues long: Probable transcriptional regulatory protein ASA_2843 (246 aa).

It belongs to the TACO1 family.

It is found in the cytoplasm. This chain is Probable transcriptional regulatory protein ASA_2843, found in Aeromonas salmonicida (strain A449).